The chain runs to 500 residues: tRNA modification GTPase MnmE (500 aa).

(6S)-5-formyl-5,6,7,8-tetrahydrofolate is bound by residues Arg24, Glu120, and Lys159. A TrmE-type G domain is found at 256 to 420 (GIPVAIIGET…LEKKLVQAAA (165 aa)). Residue Asn266 participates in K(+) binding. GTP-binding positions include 266–271 (NAGKST), 285–291 (SDIHGTT), and 310–313 (DTAG). Ser270 contributes to the Mg(2+) binding site. Residues Ser285, Ile287, and Thr290 each coordinate K(+). Position 291 (Thr291) interacts with Mg(2+). Residue Lys500 coordinates (6S)-5-formyl-5,6,7,8-tetrahydrofolate.

This sequence belongs to the TRAFAC class TrmE-Era-EngA-EngB-Septin-like GTPase superfamily. TrmE GTPase family. In terms of assembly, homodimer. Heterotetramer of two MnmE and two MnmG subunits. It depends on K(+) as a cofactor.

Its subcellular location is the cytoplasm. In terms of biological role, exhibits a very high intrinsic GTPase hydrolysis rate. Involved in the addition of a carboxymethylaminomethyl (cmnm) group at the wobble position (U34) of certain tRNAs, forming tRNA-cmnm(5)s(2)U34. In Phocaeicola vulgatus (strain ATCC 8482 / DSM 1447 / JCM 5826 / CCUG 4940 / NBRC 14291 / NCTC 11154) (Bacteroides vulgatus), this protein is tRNA modification GTPase MnmE.